We begin with the raw amino-acid sequence, 466 residues long: Ribulose bisphosphate carboxylase large chain (466 aa).

Lysine 5 carries the post-translational modification N6,N6,N6-trimethyllysine. Substrate-binding residues include asparagine 114 and threonine 164. Lysine 166 acts as the Proton acceptor in catalysis. Substrate is bound at residue lysine 168. 3 residues coordinate Mg(2+): lysine 192, aspartate 194, and glutamate 195. Lysine 192 is modified (N6-carboxylysine). Residue histidine 285 is the Proton acceptor of the active site. The substrate site is built by arginine 286, histidine 318, and serine 370.

This sequence belongs to the RuBisCO large chain family. Type I subfamily. Heterohexadecamer of 8 large chains and 8 small chains; disulfide-linked. The disulfide link is formed within the large subunit homodimers. It depends on Mg(2+) as a cofactor. In terms of processing, the disulfide bond which can form in the large chain dimeric partners within the hexadecamer appears to be associated with oxidative stress and protein turnover.

It is found in the plastid. The protein localises to the chloroplast. It catalyses the reaction 2 (2R)-3-phosphoglycerate + 2 H(+) = D-ribulose 1,5-bisphosphate + CO2 + H2O. The catalysed reaction is D-ribulose 1,5-bisphosphate + O2 = 2-phosphoglycolate + (2R)-3-phosphoglycerate + 2 H(+). Its function is as follows. RuBisCO catalyzes two reactions: the carboxylation of D-ribulose 1,5-bisphosphate, the primary event in carbon dioxide fixation, as well as the oxidative fragmentation of the pentose substrate in the photorespiration process. Both reactions occur simultaneously and in competition at the same active site. The protein is Ribulose bisphosphate carboxylase large chain of Saururus cernuus (Lizard's tail).